Consider the following 317-residue polypeptide: Probable cell division protein WhiA (317 aa).

The segment at residues 281 to 314 (SLKELGKMLEPPVGKSGVNHRLRKIEKIAEELRK) is a DNA-binding region (H-T-H motif).

Belongs to the WhiA family.

In terms of biological role, involved in cell division and chromosome segregation. The sequence is that of Probable cell division protein WhiA from Clostridium acetobutylicum (strain ATCC 824 / DSM 792 / JCM 1419 / IAM 19013 / LMG 5710 / NBRC 13948 / NRRL B-527 / VKM B-1787 / 2291 / W).